A 507-amino-acid chain; its full sequence is Type II methyltransferase M.PstI (507 aa).

It belongs to the N(4)/N(6)-methyltransferase family. In terms of assembly, monomer.

It carries out the reaction a 2'-deoxyadenosine in DNA + S-adenosyl-L-methionine = an N(6)-methyl-2'-deoxyadenosine in DNA + S-adenosyl-L-homocysteine + H(+). Its function is as follows. A gamma subtype methylase that recognizes the double-stranded sequence 5'-CTGCAG-3', methylates A-5 on both strands, and protects the DNA from cleavage by the PstI endonuclease. The sequence is that of Type II methyltransferase M.PstI (pstIM) from Providencia stuartii.